Here is a 393-residue protein sequence, read N- to C-terminus: Lipid-A-disaccharide synthase (393 aa).

This sequence belongs to the LpxB family.

It catalyses the reaction a lipid X + a UDP-2-N,3-O-bis[(3R)-3-hydroxyacyl]-alpha-D-glucosamine = a lipid A disaccharide + UDP + H(+). The protein operates within bacterial outer membrane biogenesis; LPS lipid A biosynthesis. Condensation of UDP-2,3-diacylglucosamine and 2,3-diacylglucosamine-1-phosphate to form lipid A disaccharide, a precursor of lipid A, a phosphorylated glycolipid that anchors the lipopolysaccharide to the outer membrane of the cell. The protein is Lipid-A-disaccharide synthase of Bordetella pertussis (strain Tohama I / ATCC BAA-589 / NCTC 13251).